The chain runs to 693 residues: MDSVAFEDVAINFTCEEWALLGPSQKSLYRDVMQETIRNLDCIGMIWQNHDIEEDQYKDLRRNLRCHMVERACEIKDNSQCGGPFTQTQDSIVNEKIPGVDPWESSECTDVLMGRSSLNCYVRVDSEHKPCEYQEYGEKPYTHTQCGTAFSYQPCFQIHERPQHGKKLYDCKECASFSSLENLQRHMAAHHGDGPRICKLCGNAFIWPSLFHMLRRTHTEEKPYEYEQCSTAFPAYSSTLRHERTHSGEKPYQCKQCGKAFSCSCYTQLYERTHTGEQSYECKQCGKAFYHLGSFQRHMIVHTGDGPHKCKICGKGFLSPSSVRRHKRTHTGEKPYECKYCGKAFSDCTGFRRHMITHTGDGPHKCKVCGKAFDSPSLCRRHETTHTGEKPYKCECGKAFSDFYYFRNHETTHTGEKPYKCKQCGKAFICCTYLQIHERIHTGERPYKCKQCGKAFRSSNYIRVHEKTHTGEKPYECKQCGKALSHLKSFQRHMIMHTGDGPHKCKICGKSFDSPSSFRRHERIHTGERPYKCKLCGKGFRSSSYIQLHERTHTGEKPYGCQQCGKALSDLSSFRRHMITHTGNGPHKCKICGKGFDYPSSVQRHERTHTGEKPYECKECGKAFSHSSYLRIHERVHTGEKPYKCKECGKPFHCPSAFHKHERTHSMEKPYKCKECGEAFHCISSFHKHEMTH.

The KRAB domain occupies 4–79 (VAFEDVAINF…ERACEIKDNS (76 aa)). The segment at 169 to 190 (YDCKECASFSSLENLQRHMAAH) adopts a C2H2-type 1 zinc-finger fold. The C2H2-type 2; degenerate zinc-finger motif lies at 196–218 (RICKLCGNAFIWPSLFHMLRRTH). The segment at 224–246 (YEYEQCSTAFPAYSSTLRHERTH) adopts a C2H2-type 3; degenerate zinc-finger fold. Residues 252-274 (YQCKQCGKAFSCSCYTQLYERTH) form a C2H2-type 4; degenerate zinc finger. C2H2-type zinc fingers lie at residues 280–302 (YECK…MIVH), 308–330 (HKCK…KRTH), 336–358 (YECK…MITH), 364–386 (HKCK…ETTH), 392–413 (YKCE…ETTH), 419–441 (YKCK…ERIH), 447–469 (YKCK…EKTH), 475–497 (YECK…MIMH), 503–525 (HKCK…ERIH), 531–553 (YKCK…ERTH), 559–581 (YGCQ…MITH), 587–609 (HKCK…ERTH), 615–637 (YECK…ERVH), 643–665 (YKCK…ERTH), and 671–693 (YKCK…EMTH).

Belongs to the krueppel C2H2-type zinc-finger protein family.

The protein resides in the nucleus. May be involved in transcriptional regulation. The chain is Zinc finger protein 441 (ZNF441) from Homo sapiens (Human).